Consider the following 199-residue polypeptide: NADH-quinone oxidoreductase subunit C (199 aa).

This sequence belongs to the complex I 30 kDa subunit family. As to quaternary structure, NDH-1 is composed of 14 different subunits. Subunits NuoB, C, D, E, F, and G constitute the peripheral sector of the complex.

It is found in the cell inner membrane. The enzyme catalyses a quinone + NADH + 5 H(+)(in) = a quinol + NAD(+) + 4 H(+)(out). NDH-1 shuttles electrons from NADH, via FMN and iron-sulfur (Fe-S) centers, to quinones in the respiratory chain. The immediate electron acceptor for the enzyme in this species is believed to be ubiquinone. Couples the redox reaction to proton translocation (for every two electrons transferred, four hydrogen ions are translocated across the cytoplasmic membrane), and thus conserves the redox energy in a proton gradient. This Leptothrix cholodnii (strain ATCC 51168 / LMG 8142 / SP-6) (Leptothrix discophora (strain SP-6)) protein is NADH-quinone oxidoreductase subunit C.